The primary structure comprises 433 residues: Enolase (433 aa).

Residue glutamine 167 coordinates (2R)-2-phosphoglycerate. Residue glutamate 209 is the Proton donor of the active site. Aspartate 246, glutamate 291, and aspartate 318 together coordinate Mg(2+). (2R)-2-phosphoglycerate-binding residues include lysine 343, arginine 372, serine 373, and lysine 394. Lysine 343 functions as the Proton acceptor in the catalytic mechanism.

This sequence belongs to the enolase family. Component of the RNA degradosome, a multiprotein complex involved in RNA processing and mRNA degradation. It depends on Mg(2+) as a cofactor.

It is found in the cytoplasm. Its subcellular location is the secreted. The protein localises to the cell surface. It carries out the reaction (2R)-2-phosphoglycerate = phosphoenolpyruvate + H2O. The protein operates within carbohydrate degradation; glycolysis; pyruvate from D-glyceraldehyde 3-phosphate: step 4/5. Catalyzes the reversible conversion of 2-phosphoglycerate (2-PG) into phosphoenolpyruvate (PEP). It is essential for the degradation of carbohydrates via glycolysis. The sequence is that of Enolase from Tolumonas auensis (strain DSM 9187 / NBRC 110442 / TA 4).